Here is a 138-residue protein sequence, read N- to C-terminus: Acidic phospholipase A2 homolog sistruxin A (138 aa).

The N-terminal stretch at 1–37 (MRALWIVAVLLLGVEGSLVEFETLIMKIAGRSGVWYY) is a signal peptide. Cystine bridges form between cysteine 42/cysteine 131, cysteine 44/cysteine 60, cysteine 59/cysteine 111, cysteine 65/cysteine 138, cysteine 66/cysteine 104, cysteine 73/cysteine 97, and cysteine 91/cysteine 102. Residues 78–83 (DVYTYR) constitute a propeptide that is removed on maturation. Glutamine 84 carries the post-translational modification Pyrrolidone carboxylic acid. Residues 119–124 (YNHKYW) constitute a propeptide that is removed on maturation.

This sequence belongs to the phospholipase A2 family. Group II subfamily. D49 sub-subfamily. Heterodimer of an acidic subunit and a basic chain. The acidic subunit is non-toxic, without enzymatic activity and comprises 3 peptides that are cross-linked by 7 disulfide bridges. The basic subunit is toxic, has phospholipase A2 activity and is composed of a single chain. As to expression, expressed by the venom gland.

It is found in the secreted. Its function is as follows. Snake venom phospholipase A2 (PLA2) that inhibits neuromuscular transmission by blocking acetylcholine release from the nerve termini. This is Acidic phospholipase A2 homolog sistruxin A from Sistrurus tergeminus (Western massasauga).